Consider the following 146-residue polypeptide: Putative actin-depolymerizing factor 8 (146 aa).

The ADF-H domain occupies 14–144; it reads PAWIEVPEKS…DLEVLRGRAN (131 aa).

This sequence belongs to the actin-binding proteins ADF family.

In terms of biological role, actin-depolymerizing protein. Severs actin filaments (F-actin) and binds to actin monomers. The protein is Putative actin-depolymerizing factor 8 (ADF8) of Oryza sativa subsp. japonica (Rice).